Here is a 288-residue protein sequence, read N- to C-terminus: MKKRLFIISQYLLPHHLLSRLAGCIAECRVRWFKNAFTRWFAKQYQVDMSEAQVEDVTAYEHFNAFFTRALKDGARPLDPTPGAVLSPADGAVSQLGPIEHGRVFQAKGHSYSVLELLGGDPALAQPFMGGDFATIYLSPKDYHRVHMPLAGTLREMVYVPGRIFSVNQTTAENVPELFARNERVVCIFDTERGPMALVLVGAMIVASIETVWAGLVTPPKRELKTVRYDEAARAPIHLEKGAEMGRFKLGSTAIVLFGPDQVQWAQELAAGSPVRMGQGLGLGLPKA.

Residues Asp-90, His-147, and Ser-252 each act as charge relay system; for autoendoproteolytic cleavage activity in the active site. Ser-252 (schiff-base intermediate with substrate; via pyruvic acid; for decarboxylase activity) is an active-site residue. Ser-252 carries the pyruvic acid (Ser); by autocatalysis modification.

This sequence belongs to the phosphatidylserine decarboxylase family. PSD-B subfamily. Prokaryotic type I sub-subfamily. Heterodimer of a large membrane-associated beta subunit and a small pyruvoyl-containing alpha subunit. Pyruvate is required as a cofactor. Is synthesized initially as an inactive proenzyme. Formation of the active enzyme involves a self-maturation process in which the active site pyruvoyl group is generated from an internal serine residue via an autocatalytic post-translational modification. Two non-identical subunits are generated from the proenzyme in this reaction, and the pyruvate is formed at the N-terminus of the alpha chain, which is derived from the carboxyl end of the proenzyme. The autoendoproteolytic cleavage occurs by a canonical serine protease mechanism, in which the side chain hydroxyl group of the serine supplies its oxygen atom to form the C-terminus of the beta chain, while the remainder of the serine residue undergoes an oxidative deamination to produce ammonia and the pyruvoyl prosthetic group on the alpha chain. During this reaction, the Ser that is part of the protease active site of the proenzyme becomes the pyruvoyl prosthetic group, which constitutes an essential element of the active site of the mature decarboxylase.

The protein resides in the cell membrane. The catalysed reaction is a 1,2-diacyl-sn-glycero-3-phospho-L-serine + H(+) = a 1,2-diacyl-sn-glycero-3-phosphoethanolamine + CO2. Its pathway is phospholipid metabolism; phosphatidylethanolamine biosynthesis; phosphatidylethanolamine from CDP-diacylglycerol: step 2/2. Catalyzes the formation of phosphatidylethanolamine (PtdEtn) from phosphatidylserine (PtdSer). This Pseudomonas fluorescens (strain ATCC BAA-477 / NRRL B-23932 / Pf-5) protein is Phosphatidylserine decarboxylase proenzyme.